An 859-amino-acid polypeptide reads, in one-letter code: DNA mismatch repair protein MutS (859 aa).

614 to 621 (GPNMGGKS) serves as a coordination point for ATP.

It belongs to the DNA mismatch repair MutS family.

Functionally, this protein is involved in the repair of mismatches in DNA. It is possible that it carries out the mismatch recognition step. This protein has a weak ATPase activity. This is DNA mismatch repair protein MutS from Histophilus somni (strain 2336) (Haemophilus somnus).